We begin with the raw amino-acid sequence, 625 residues long: Protein arginine N-methyltransferase skb1 (625 aa).

The 309-residue stretch at 280-588 folds into the SAM-dependent MTase PRMT-type domain; the sequence is LQVPLQPLSY…WRLTDGMRVW (309 aa). S-adenosyl-L-methionine is bound by residues Tyr296, 305–306, Glu359, and 386–387; these read KY and DM. Residues Glu402 and Glu411 each act as proton donor/acceptor in the active site.

It belongs to the class I-like SAM-binding methyltransferase superfamily. Protein arginine N-methyltransferase family. In terms of assembly, interacts with the N-terminal regulatory domain of shk1. Shk1, cdc42 and skb1 are able to form a ternary complex in vivo. Interacts with orb6. Interacts with Cdr1 and the Cdr1 inhibitory target Wee1.

The protein resides in the nucleus. It localises to the cell tip. Its subcellular location is the cell septum. It is found in the cytoplasm. The protein localises to the cell cortex. In terms of biological role, S-adenosyl-L-methionine-dependent protein-arginine N-methyltransferase that can catalyze both the mono- and symmetric (type II) dimethylation of the guanidino nitrogens of arginine residues in target proteins. Delays mitotic entry by inhibiting the Cdr1-Wee1 signaling pathway. Cortical nodes sequester Skb1 from its regulatory targets Cdr1 and Wee1. Positively modulates the shk1 kinase function. May be a mediator of hyperosmotic stress response. Involved in the control of cell polarity by regulating the subcellular localization of Orb6 kinase. The protein is Protein arginine N-methyltransferase skb1 of Schizosaccharomyces pombe (strain 972 / ATCC 24843) (Fission yeast).